The chain runs to 478 residues: Ribulose bisphosphate carboxylase large chain (478 aa).

A propeptide spanning residues 1 to 2 (MS) is cleaved from the precursor. Pro-3 carries the post-translational modification N-acetylproline. Lys-14 bears the N6,N6,N6-trimethyllysine mark. Substrate-binding residues include Asn-123 and Thr-173. Lys-175 serves as the catalytic Proton acceptor. Lys-177 lines the substrate pocket. Residues Lys-201, Asp-203, and Glu-204 each contribute to the Mg(2+) site. The residue at position 201 (Lys-201) is an N6-carboxylysine. The active-site Proton acceptor is His-294. Arg-295, His-327, and Ser-379 together coordinate substrate.

Belongs to the RuBisCO large chain family. Type I subfamily. As to quaternary structure, heterohexadecamer of 8 large chains and 8 small chains; disulfide-linked. The disulfide link is formed within the large subunit homodimers. Mg(2+) is required as a cofactor. The disulfide bond which can form in the large chain dimeric partners within the hexadecamer appears to be associated with oxidative stress and protein turnover.

Its subcellular location is the plastid. The protein resides in the chloroplast. The enzyme catalyses 2 (2R)-3-phosphoglycerate + 2 H(+) = D-ribulose 1,5-bisphosphate + CO2 + H2O. The catalysed reaction is D-ribulose 1,5-bisphosphate + O2 = 2-phosphoglycolate + (2R)-3-phosphoglycerate + 2 H(+). RuBisCO catalyzes two reactions: the carboxylation of D-ribulose 1,5-bisphosphate, the primary event in carbon dioxide fixation, as well as the oxidative fragmentation of the pentose substrate in the photorespiration process. Both reactions occur simultaneously and in competition at the same active site. In Neurachne munroi, this protein is Ribulose bisphosphate carboxylase large chain.